A 543-amino-acid chain; its full sequence is MKFLTTGLLATAALAAAQEQQVLQAEDGMGQAPQRGSSIFDETLQKFQSSLEDGISHFWSEMKTNFKDYLPLISLPKKHTRRPDSEWDHVVRGADIESVWVQGADGEKRREIDGKLHNYDLRVKAVDPSKLGVDAGVKQYSGYLDDNDADKHLFYWFFESRNDPKNDPVVLWLNGGPGCSSLTGLFLELGPATIDKNLKVVSNPYSWNSNASVIFLDQPVNVGFSYSGSSVSDTVAAGKDIYALLTLFFKQFPEYATQDFHISGESYAGHYIPVFAAEILSHKNTNINLKSALIGNGLTDPLTQYPQYRPMACGEGGYPAVLDQGTCRSMDNSLERCLSLIETCYSSESAWICVPAAMYCNSAILAPYQQTGMNPYDVRNKCEDMASLCYPQLNVITEWLNQKSVMQALGVEVESYESCNSGINRDFLFHGDWMKPYHRLVPSVLEKIPVLIYAGDADFICNWLGNQAWTDALEWPGHKKFAEAKLEDLKIVDNKNKGKKIGQVKSSGNFTFMRIFGAGHMVPLNQPEASLEFLNRWLRGEWH.

The first 17 residues, methionine 1–alanine 17, serve as a signal peptide directing secretion. Residues glutamine 18–lysine 124 constitute a propeptide that is removed on maturation. Intrachain disulfides connect cysteine 179-cysteine 419, cysteine 313-cysteine 327, cysteine 337-cysteine 360, cysteine 344-cysteine 353, and cysteine 382-cysteine 389. N-linked (GlcNAc...) asparagine glycosylation is present at asparagine 210. Serine 266 is a catalytic residue. Aspartate 458 is an active-site residue. Asparagine 509 carries an N-linked (GlcNAc...) asparagine glycan. The active site involves histidine 520.

This sequence belongs to the peptidase S10 family.

The protein localises to the vacuole. It catalyses the reaction Release of a C-terminal amino acid with broad specificity.. In terms of biological role, vacuolar carboxypeptidase involved in degradation of small peptides. Digests preferentially peptides containing an aliphatic or hydrophobic residue in P1' position, as well as methionine, leucine or phenylalanine in P1 position of ester substrate. The sequence is that of Carboxypeptidase Y homolog A (CPYA) from Trichophyton tonsurans (Scalp ringworm fungus).